Consider the following 443-residue polypeptide: tRNA modification GTPase MnmE (443 aa).

(6S)-5-formyl-5,6,7,8-tetrahydrofolate contacts are provided by arginine 23, glutamate 82, and lysine 121. Residues glycine 215 to glutamine 364 form the TrmE-type G domain. Asparagine 225 contacts K(+). Residues asparagine 225 to serine 230, threonine 244 to threonine 250, and aspartate 269 to glycine 272 contribute to the GTP site. Residue serine 229 participates in Mg(2+) binding. K(+) is bound by residues threonine 244, isoleucine 246, and threonine 249. Threonine 250 contributes to the Mg(2+) binding site. Lysine 443 contributes to the (6S)-5-formyl-5,6,7,8-tetrahydrofolate binding site.

This sequence belongs to the TRAFAC class TrmE-Era-EngA-EngB-Septin-like GTPase superfamily. TrmE GTPase family. Homodimer. Heterotetramer of two MnmE and two MnmG subunits. K(+) is required as a cofactor.

The protein localises to the cytoplasm. Exhibits a very high intrinsic GTPase hydrolysis rate. Involved in the addition of a carboxymethylaminomethyl (cmnm) group at the wobble position (U34) of certain tRNAs, forming tRNA-cmnm(5)s(2)U34. This is tRNA modification GTPase MnmE from Chlamydia caviae (strain ATCC VR-813 / DSM 19441 / 03DC25 / GPIC) (Chlamydophila caviae).